Consider the following 402-residue polypeptide: Nicotinate phosphoribosyltransferase (402 aa).

H224 carries the phosphohistidine; by autocatalysis modification.

Belongs to the NAPRTase family. Transiently phosphorylated on a His residue during the reaction cycle. Phosphorylation strongly increases the affinity for substrates and increases the rate of nicotinate D-ribonucleotide production. Dephosphorylation regenerates the low-affinity form of the enzyme, leading to product release.

It carries out the reaction nicotinate + 5-phospho-alpha-D-ribose 1-diphosphate + ATP + H2O = nicotinate beta-D-ribonucleotide + ADP + phosphate + diphosphate. The protein operates within cofactor biosynthesis; NAD(+) biosynthesis; nicotinate D-ribonucleotide from nicotinate: step 1/1. Catalyzes the synthesis of beta-nicotinate D-ribonucleotide from nicotinate and 5-phospho-D-ribose 1-phosphate at the expense of ATP. The protein is Nicotinate phosphoribosyltransferase of Neisseria gonorrhoeae (strain ATCC 700825 / FA 1090).